The sequence spans 75 residues: Small ribosomal subunit protein bS18 (75 aa).

Belongs to the bacterial ribosomal protein bS18 family. As to quaternary structure, part of the 30S ribosomal subunit. Forms a tight heterodimer with protein bS6.

In terms of biological role, binds as a heterodimer with protein bS6 to the central domain of the 16S rRNA, where it helps stabilize the platform of the 30S subunit. This is Small ribosomal subunit protein bS18 from Anaplasma marginale (strain St. Maries).